A 100-amino-acid chain; its full sequence is NAD(P)H-quinone oxidoreductase subunit 4L, chloroplastic (100 aa).

3 consecutive transmembrane segments (helical) span residues 1–21 (MLENSLILGAYLFCLGIYGLT), 30–50 (LMCLELMLNGVNINLVAFSSF), and 60–80 (VFAIFIIAIAAAEAAIGLAII).

Belongs to the complex I subunit 4L family. As to quaternary structure, NDH is composed of at least 16 different subunits, 5 of which are encoded in the nucleus.

The protein resides in the plastid. It is found in the chloroplast thylakoid membrane. It carries out the reaction a plastoquinone + NADH + (n+1) H(+)(in) = a plastoquinol + NAD(+) + n H(+)(out). The catalysed reaction is a plastoquinone + NADPH + (n+1) H(+)(in) = a plastoquinol + NADP(+) + n H(+)(out). In terms of biological role, NDH shuttles electrons from NAD(P)H:plastoquinone, via FMN and iron-sulfur (Fe-S) centers, to quinones in the photosynthetic chain and possibly in a chloroplast respiratory chain. The immediate electron acceptor for the enzyme in this species is believed to be plastoquinone. Couples the redox reaction to proton translocation, and thus conserves the redox energy in a proton gradient. In Staurastrum punctulatum (Green alga), this protein is NAD(P)H-quinone oxidoreductase subunit 4L, chloroplastic.